The chain runs to 301 residues: dTDP-4-dehydrorhamnose reductase (301 aa).

NADH contacts are provided by residues 10–12 (GQV), Asp-30, 39–40 (DF), and 63–65 (AHT). 11-12 (QV) lines the NADPH pocket. NADPH is bound by residues 39–40 (DF), 63–65 (AHT), and Tyr-102. 104 to 105 (TD) lines the dTDP-beta-L-rhamnose pocket. NADH is bound by residues Tyr-129 and Lys-133. 2 residues coordinate NADPH: Tyr-129 and Lys-133. The Proton donor/acceptor role is filled by Tyr-129. Residue Trp-155 participates in dTDP-beta-L-rhamnose binding.

Belongs to the dTDP-4-dehydrorhamnose reductase family. As to quaternary structure, homodimer. It depends on Mg(2+) as a cofactor.

The enzyme catalyses dTDP-beta-L-rhamnose + NADP(+) = dTDP-4-dehydro-beta-L-rhamnose + NADPH + H(+). Its pathway is carbohydrate biosynthesis; dTDP-L-rhamnose biosynthesis. It functions in the pathway bacterial outer membrane biogenesis; LPS O-antigen biosynthesis. In terms of biological role, involved in the biosynthesis of the dTDP-L-rhamnose which is an important component of lipopolysaccharide (LPS). Catalyzes the reduction of dTDP-6-deoxy-L-lyxo-4-hexulose to yield dTDP-L-rhamnose. RmlD uses NADH and NADPH nearly equally well. In Escherichia coli, this protein is dTDP-4-dehydrorhamnose reductase.